A 1203-amino-acid chain; its full sequence is DNA-directed RNA polymerase subunit beta (1203 aa).

Positions 1174 to 1195 (AAQEAKAAFEAEEAEKATKAEA) are enriched in basic and acidic residues. The tract at residues 1174–1203 (AAQEAKAAFEAEEAEKATKAEATEEAAEQE) is disordered.

Belongs to the RNA polymerase beta chain family. The RNAP catalytic core consists of 2 alpha, 1 beta, 1 beta' and 1 omega subunit. When a sigma factor is associated with the core the holoenzyme is formed, which can initiate transcription.

The catalysed reaction is RNA(n) + a ribonucleoside 5'-triphosphate = RNA(n+1) + diphosphate. Its function is as follows. DNA-dependent RNA polymerase catalyzes the transcription of DNA into RNA using the four ribonucleoside triphosphates as substrates. This chain is DNA-directed RNA polymerase subunit beta, found in Streptococcus pneumoniae (strain ATCC 700669 / Spain 23F-1).